We begin with the raw amino-acid sequence, 290 residues long: Diaminopimelate epimerase (290 aa).

The substrate site is built by Asn-11 and Asn-78. Catalysis depends on Cys-87, which acts as the Proton donor. Residues 88-89, Asn-163, Asn-199, and 217-218 contribute to the substrate site; these read GN and ER. Cys-226 (proton acceptor) is an active-site residue. 227–228 contacts substrate; the sequence is GT.

This sequence belongs to the diaminopimelate epimerase family. As to quaternary structure, homodimer.

It localises to the cytoplasm. The enzyme catalyses (2S,6S)-2,6-diaminopimelate = meso-2,6-diaminopimelate. Its pathway is amino-acid biosynthesis; L-lysine biosynthesis via DAP pathway; DL-2,6-diaminopimelate from LL-2,6-diaminopimelate: step 1/1. In terms of biological role, catalyzes the stereoinversion of LL-2,6-diaminopimelate (L,L-DAP) to meso-diaminopimelate (meso-DAP), a precursor of L-lysine and an essential component of the bacterial peptidoglycan. The sequence is that of Diaminopimelate epimerase from Mycobacterium ulcerans (strain Agy99).